A 203-amino-acid polypeptide reads, in one-letter code: dITP/XTP pyrophosphatase (203 aa).

8-13 (TANKGK) lines the substrate pocket. Mg(2+)-binding residues include E41 and D70. D70 (proton acceptor) is an active-site residue. Substrate-binding positions include S71, 153–156 (FGYD), K176, and 181–182 (HR).

The protein belongs to the HAM1 NTPase family. Homodimer. The cofactor is Mg(2+).

The catalysed reaction is XTP + H2O = XMP + diphosphate + H(+). It carries out the reaction dITP + H2O = dIMP + diphosphate + H(+). The enzyme catalyses ITP + H2O = IMP + diphosphate + H(+). Pyrophosphatase that catalyzes the hydrolysis of nucleoside triphosphates to their monophosphate derivatives, with a high preference for the non-canonical purine nucleotides XTP (xanthosine triphosphate), dITP (deoxyinosine triphosphate) and ITP. Seems to function as a house-cleaning enzyme that removes non-canonical purine nucleotides from the nucleotide pool, thus preventing their incorporation into DNA/RNA and avoiding chromosomal lesions. The polypeptide is dITP/XTP pyrophosphatase (Listeria monocytogenes serotype 4b (strain F2365)).